Consider the following 518-residue polypeptide: MNSQVIIFDTTLRDGEQALQASLSVKQKLQIALSLENAGIDIIEVGFPISSPGDFKSVQTISKNIKNSRICSLARCLNKDIDTAAEAMSSSNTFRIHIFLATSTLHMESKLKKNFDQIIDMAISSVKRALRYTDDVEFSCEDASRTTMDNLCRIVEQLIKAGVKTINIPDTVGYTVPNELSTIIHNLFKRVPNIDQSIISVHCHNDLGMAVGNSISAIQAGARQIEGTINGIGERAGNTALEEVIMAIKVREDILGVSTNIKHKEIYRTSQIISQICNLPIPPNKAIVGSNAFAHSSGIHQDGVLKNRKNYEIMEPSSIGLKEVKLNLTSRSGRAAVKYYMTQMGYKECDYNIDELYTSFLKLADKKGQVFDYDLEALAFINMQQEESEYFSLSFFSVQSISNGLSTASVKLLCGKKVSIESATTSNGPIDAIYQALNRITNFPITLQKYQLVAKGKGRDALGQVDILVEYKKRKFHGVGLATDIIESSAQAMVNVLNNIWKANQVNEKLKTLKKVNN.

Positions 5–267 (VIIFDTTLRD…STNIKHKEIY (263 aa)) constitute a Pyruvate carboxyltransferase domain. Residues aspartate 14, histidine 202, histidine 204, and asparagine 238 each contribute to the Mn(2+) site. A regulatory domain region spans residues 392–518 (SLSFFSVQSI…KLKTLKKVNN (127 aa)).

The protein belongs to the alpha-IPM synthase/homocitrate synthase family. LeuA type 1 subfamily. In terms of assembly, homodimer. The cofactor is Mn(2+).

The protein localises to the cytoplasm. The enzyme catalyses 3-methyl-2-oxobutanoate + acetyl-CoA + H2O = (2S)-2-isopropylmalate + CoA + H(+). It functions in the pathway amino-acid biosynthesis; L-leucine biosynthesis; L-leucine from 3-methyl-2-oxobutanoate: step 1/4. Catalyzes the condensation of the acetyl group of acetyl-CoA with 3-methyl-2-oxobutanoate (2-ketoisovalerate) to form 3-carboxy-3-hydroxy-4-methylpentanoate (2-isopropylmalate). This is 2-isopropylmalate synthase from Buchnera aphidicola subsp. Schizaphis graminum (strain Sg).